The primary structure comprises 283 residues: Shikimate dehydrogenase (NADP(+)) (283 aa).

Residues 16–18 (SLS) and Thr63 each bind shikimate. The active-site Proton acceptor is the Lys67. Asp79 contacts NADP(+). Shikimate is bound by residues Asn88 and Asp103. NADP(+) contacts are provided by residues 128–132 (GAGGA), Ala223, and Gly243.

It belongs to the shikimate dehydrogenase family. As to quaternary structure, homodimer.

It catalyses the reaction shikimate + NADP(+) = 3-dehydroshikimate + NADPH + H(+). Its pathway is metabolic intermediate biosynthesis; chorismate biosynthesis; chorismate from D-erythrose 4-phosphate and phosphoenolpyruvate: step 4/7. Its function is as follows. Involved in the biosynthesis of the chorismate, which leads to the biosynthesis of aromatic amino acids. Catalyzes the reversible NADPH linked reduction of 3-dehydroshikimate (DHSA) to yield shikimate (SA). This chain is Shikimate dehydrogenase (NADP(+)), found in Xanthomonas oryzae pv. oryzae (strain MAFF 311018).